The primary structure comprises 339 residues: Lipoate-protein ligase A (339 aa).

Positions 29–217 constitute a BPL/LPL catalytic domain; the sequence is PKKQSILFLW…AFFQHYGMKV (189 aa). ATP-binding positions include Arg71, 76-79, and Lys135; that span reads GAVF. Lys135 provides a ligand contact to (R)-lipoate.

This sequence belongs to the LplA family. As to quaternary structure, monomer.

It localises to the cytoplasm. It catalyses the reaction L-lysyl-[lipoyl-carrier protein] + (R)-lipoate + ATP = N(6)-[(R)-lipoyl]-L-lysyl-[lipoyl-carrier protein] + AMP + diphosphate + H(+). Its pathway is protein modification; protein lipoylation via exogenous pathway; protein N(6)-(lipoyl)lysine from lipoate: step 1/2. It functions in the pathway protein modification; protein lipoylation via exogenous pathway; protein N(6)-(lipoyl)lysine from lipoate: step 2/2. Functionally, catalyzes both the ATP-dependent activation of exogenously supplied lipoate to lipoyl-AMP and the transfer of the activated lipoyl onto the lipoyl domains of lipoate-dependent enzymes. In Blochmanniella pennsylvanica (strain BPEN), this protein is Lipoate-protein ligase A.